Reading from the N-terminus, the 374-residue chain is O-methyltransferase 16 (374 aa).

Positions 195, 219, 242, 262, and 276 each coordinate S-adenosyl-L-homocysteine. S-adenosyl-L-methionine is bound at residue aspartate 242. The active-site Proton acceptor is histidine 280.

The protein belongs to the class I-like SAM-binding methyltransferase superfamily. Cation-independent O-methyltransferase family. Homodimer. Expressed mainly in vasculature and cortex tissues at low levels.

The enzyme catalyses dopamine + S-adenosyl-L-methionine = 4-methoxytyramine + S-adenosyl-L-homocysteine + H(+). The protein operates within aromatic compound metabolism. It functions in the pathway alkaloid biosynthesis. O-methyltransferase participating in the biosynthesis of natural products derived from phenylethylamine, including mescaline, a natural hallucinogen potentially used in psychotherapeutic treatments. Catalyzes the O-methylation of dopamine to produce 4-methoxytyramine. The polypeptide is O-methyltransferase 16 (Lophophora williamsii (Peyote)).